The sequence spans 424 residues: Methylthioribose-1-phosphate isomerase (424 aa).

Asp281 acts as the Proton donor in catalysis.

Belongs to the eIF-2B alpha/beta/delta subunits family. MtnA subfamily.

It localises to the cytoplasm. The protein resides in the nucleus. It catalyses the reaction 5-(methylsulfanyl)-alpha-D-ribose 1-phosphate = 5-(methylsulfanyl)-D-ribulose 1-phosphate. It functions in the pathway amino-acid biosynthesis; L-methionine biosynthesis via salvage pathway; L-methionine from S-methyl-5-thio-alpha-D-ribose 1-phosphate: step 1/6. In terms of biological role, catalyzes the interconversion of methylthioribose-1-phosphate (MTR-1-P) into methylthioribulose-1-phosphate (MTRu-1-P). The protein is Methylthioribose-1-phosphate isomerase of Candida dubliniensis (strain CD36 / ATCC MYA-646 / CBS 7987 / NCPF 3949 / NRRL Y-17841) (Yeast).